The primary structure comprises 144 residues: MAQQILVLHGPNLNLLGSREPHLYGSLTLAQINQGLETLAAQLGVGLTAWQSNHEGALVERIQAARQDGTDFIIINAAAYTHTSVAVRDALAAVAIPFIEVHLSNLYKREPFRQHSYLSDLAVGLVCGLGADGYEAAVRYAARH.

The active-site Proton acceptor is the Y24. Residues N76, H82, and D89 each coordinate substrate. H102 acts as the Proton donor in catalysis. Substrate contacts are provided by residues 103 to 104 (LS) and R113.

The protein belongs to the type-II 3-dehydroquinase family. In terms of assembly, homododecamer.

The catalysed reaction is 3-dehydroquinate = 3-dehydroshikimate + H2O. It functions in the pathway metabolic intermediate biosynthesis; chorismate biosynthesis; chorismate from D-erythrose 4-phosphate and phosphoenolpyruvate: step 3/7. Functionally, catalyzes a trans-dehydration via an enolate intermediate. This Bordetella petrii (strain ATCC BAA-461 / DSM 12804 / CCUG 43448) protein is 3-dehydroquinate dehydratase.